The following is a 218-amino-acid chain: Cytochrome b6 (218 aa).

The chain crosses the membrane as a helical span at residues 35 to 55 (IFYCLGGITLTCFLVQVATGF). Cys38 is a heme c binding site. Residues His89 and His103 each coordinate heme b. The next 3 membrane-spanning stretches (helical) occupy residues 93 to 113 (ASMM…TGGF), 119 to 139 (LTWV…VTGY), and 189 to 209 (LHTF…FLMI). Residues His190 and His205 each coordinate heme b.

The protein belongs to the cytochrome b family. PetB subfamily. The 4 large subunits of the cytochrome b6-f complex are cytochrome b6, subunit IV (17 kDa polypeptide, PetD), cytochrome f and the Rieske protein, while the 4 small subunits are PetG, PetL, PetM and PetN. The complex functions as a dimer. Heme b is required as a cofactor. Requires heme c as cofactor.

The protein localises to the plastid thylakoid membrane. In terms of biological role, component of the cytochrome b6-f complex, which mediates electron transfer between photosystem II (PSII) and photosystem I (PSI), cyclic electron flow around PSI, and state transitions. This chain is Cytochrome b6 (petB), found in Cuscuta gronovii (Common dodder).